We begin with the raw amino-acid sequence, 256 residues long: Imidazole glycerol phosphate synthase subunit HisF (256 aa).

Catalysis depends on residues D11 and D130.

Belongs to the HisA/HisF family. In terms of assembly, heterodimer of HisH and HisF.

It localises to the cytoplasm. The catalysed reaction is 5-[(5-phospho-1-deoxy-D-ribulos-1-ylimino)methylamino]-1-(5-phospho-beta-D-ribosyl)imidazole-4-carboxamide + L-glutamine = D-erythro-1-(imidazol-4-yl)glycerol 3-phosphate + 5-amino-1-(5-phospho-beta-D-ribosyl)imidazole-4-carboxamide + L-glutamate + H(+). The protein operates within amino-acid biosynthesis; L-histidine biosynthesis; L-histidine from 5-phospho-alpha-D-ribose 1-diphosphate: step 5/9. In terms of biological role, IGPS catalyzes the conversion of PRFAR and glutamine to IGP, AICAR and glutamate. The HisF subunit catalyzes the cyclization activity that produces IGP and AICAR from PRFAR using the ammonia provided by the HisH subunit. The chain is Imidazole glycerol phosphate synthase subunit HisF from Cupriavidus taiwanensis (strain DSM 17343 / BCRC 17206 / CCUG 44338 / CIP 107171 / LMG 19424 / R1) (Ralstonia taiwanensis (strain LMG 19424)).